Here is a 710-residue protein sequence, read N- to C-terminus: Putative transmembrane protein ORF710 (710 aa).

An N-terminal signal peptide occupies residues 1–33 (MKLDRKKKRLLLKTIFSIVILILPLTFLHPTNS). The next 3 membrane-spanning stretches (helical) occupy residues 41–61 (VPIQ…TAPL), 76–95 (YGTL…VVWY), and 689–709 (VAIV…IFAI).

The protein resides in the host membrane. The polypeptide is Putative transmembrane protein ORF710 (Acidianus convivator (ATV)).